Consider the following 157-residue polypeptide: Small ribosomal subunit protein uS7 (157 aa).

It belongs to the universal ribosomal protein uS7 family. As to quaternary structure, part of the 30S ribosomal subunit. Contacts proteins S9 and S11.

Functionally, one of the primary rRNA binding proteins, it binds directly to 16S rRNA where it nucleates assembly of the head domain of the 30S subunit. Is located at the subunit interface close to the decoding center, probably blocks exit of the E-site tRNA. This is Small ribosomal subunit protein uS7 from Akkermansia muciniphila (strain ATCC BAA-835 / DSM 22959 / JCM 33894 / BCRC 81048 / CCUG 64013 / CIP 107961 / Muc).